Reading from the N-terminus, the 472-residue chain is Tryptophanase (472 aa).

Lysine 270 carries the N6-(pyridoxal phosphate)lysine modification.

It belongs to the beta-eliminating lyase family. As to quaternary structure, homotetramer. Requires pyridoxal 5'-phosphate as cofactor.

It carries out the reaction L-tryptophan + H2O = indole + pyruvate + NH4(+). It participates in amino-acid degradation; L-tryptophan degradation via pyruvate pathway; indole and pyruvate from L-tryptophan: step 1/1. This chain is Tryptophanase (tnaA), found in Vibrio cholerae serotype O1 (strain ATCC 39315 / El Tor Inaba N16961).